The chain runs to 474 residues: UDP-N-acetylmuramate--L-alanine ligase (474 aa).

112 to 118 is an ATP binding site; the sequence is GTHGKTT.

The protein belongs to the MurCDEF family.

It localises to the cytoplasm. It carries out the reaction UDP-N-acetyl-alpha-D-muramate + L-alanine + ATP = UDP-N-acetyl-alpha-D-muramoyl-L-alanine + ADP + phosphate + H(+). It participates in cell wall biogenesis; peptidoglycan biosynthesis. Functionally, cell wall formation. This chain is UDP-N-acetylmuramate--L-alanine ligase, found in Cupriavidus taiwanensis (strain DSM 17343 / BCRC 17206 / CCUG 44338 / CIP 107171 / LMG 19424 / R1) (Ralstonia taiwanensis (strain LMG 19424)).